A 392-amino-acid chain; its full sequence is Nicotinate phosphoribosyltransferase (392 aa).

Histidine 216 is subject to Phosphohistidine; by autocatalysis.

It belongs to the NAPRTase family. Transiently phosphorylated on a His residue during the reaction cycle. Phosphorylation strongly increases the affinity for substrates and increases the rate of nicotinate D-ribonucleotide production. Dephosphorylation regenerates the low-affinity form of the enzyme, leading to product release.

It carries out the reaction nicotinate + 5-phospho-alpha-D-ribose 1-diphosphate + ATP + H2O = nicotinate beta-D-ribonucleotide + ADP + phosphate + diphosphate. It functions in the pathway cofactor biosynthesis; NAD(+) biosynthesis; nicotinate D-ribonucleotide from nicotinate: step 1/1. Catalyzes the synthesis of beta-nicotinate D-ribonucleotide from nicotinate and 5-phospho-D-ribose 1-phosphate at the expense of ATP. The sequence is that of Nicotinate phosphoribosyltransferase from Cupriavidus necator (strain ATCC 17699 / DSM 428 / KCTC 22496 / NCIMB 10442 / H16 / Stanier 337) (Ralstonia eutropha).